The chain runs to 711 residues: Polyribonucleotide nucleotidyltransferase (711 aa).

Residues Asp-490 and Asp-496 each coordinate Mg(2+). Residues 556 to 615 (PRIETMQVPTDKIREVIGSGGKVIREIVEVSGAKVDINDDGVIKIASANGEAIQKAYDMI) form the KH domain. Positions 625-693 (GAVYTGKVVK…DRGKVRLSMK (69 aa)) constitute an S1 motif domain.

This sequence belongs to the polyribonucleotide nucleotidyltransferase family. Requires Mg(2+) as cofactor.

It localises to the cytoplasm. It carries out the reaction RNA(n+1) + phosphate = RNA(n) + a ribonucleoside 5'-diphosphate. In terms of biological role, involved in mRNA degradation. Catalyzes the phosphorolysis of single-stranded polyribonucleotides processively in the 3'- to 5'-direction. This chain is Polyribonucleotide nucleotidyltransferase, found in Ruegeria sp. (strain TM1040) (Silicibacter sp.).